A 430-amino-acid polypeptide reads, in one-letter code: Tol-Pal system protein TolB (430 aa).

The N-terminal stretch at 1 to 21 (MKQAFRVALSVLMLFVAVAHA) is a signal peptide.

Belongs to the TolB family. In terms of assembly, the Tol-Pal system is composed of five core proteins: the inner membrane proteins TolA, TolQ and TolR, the periplasmic protein TolB and the outer membrane protein Pal. They form a network linking the inner and outer membranes and the peptidoglycan layer.

It is found in the periplasm. Functionally, part of the Tol-Pal system, which plays a role in outer membrane invagination during cell division and is important for maintaining outer membrane integrity. TolB occupies a key intermediary position in the Tol-Pal system because it communicates directly with both membrane-embedded components, Pal in the outer membrane and TolA in the inner membrane. This is Tol-Pal system protein TolB from Erwinia tasmaniensis (strain DSM 17950 / CFBP 7177 / CIP 109463 / NCPPB 4357 / Et1/99).